Here is a 117-residue protein sequence, read N- to C-terminus: DNA-binding protein MK1619 (117 aa).

Belongs to the PDCD5 family.

The sequence is that of DNA-binding protein MK1619 from Methanopyrus kandleri (strain AV19 / DSM 6324 / JCM 9639 / NBRC 100938).